A 435-amino-acid chain; its full sequence is Adenylosuccinate synthetase (435 aa).

GTP is bound by residues 17 to 23 (GDEGKGK) and 45 to 47 (GHT). The Proton acceptor role is filled by aspartate 18. 2 residues coordinate Mg(2+): aspartate 18 and glycine 45. IMP is bound by residues 18–21 (DEGK), 43–46 (NAGH), threonine 134, arginine 148, glutamine 229, threonine 244, and arginine 308. The Proton donor role is filled by histidine 46. 304–310 (SVTGRPR) contributes to the substrate binding site. GTP-binding positions include arginine 310, 336–338 (KLD), and 418–420 (STG).

The protein belongs to the adenylosuccinate synthetase family. Homodimer. The cofactor is Mg(2+).

The protein resides in the cytoplasm. The catalysed reaction is IMP + L-aspartate + GTP = N(6)-(1,2-dicarboxyethyl)-AMP + GDP + phosphate + 2 H(+). The protein operates within purine metabolism; AMP biosynthesis via de novo pathway; AMP from IMP: step 1/2. Its function is as follows. Plays an important role in the de novo pathway of purine nucleotide biosynthesis. Catalyzes the first committed step in the biosynthesis of AMP from IMP. In Bordetella parapertussis (strain 12822 / ATCC BAA-587 / NCTC 13253), this protein is Adenylosuccinate synthetase.